Consider the following 470-residue polypeptide: Glucose-1-phosphate adenylyltransferase (470 aa).

Alpha-D-glucose 1-phosphate-binding positions include Gly-165, 182-183 (EK), and Ser-200.

Belongs to the bacterial/plant glucose-1-phosphate adenylyltransferase family. Homotetramer.

The catalysed reaction is alpha-D-glucose 1-phosphate + ATP + H(+) = ADP-alpha-D-glucose + diphosphate. It functions in the pathway glycan biosynthesis; glycogen biosynthesis. Functionally, involved in the biosynthesis of ADP-glucose, a building block required for the elongation reactions to produce glycogen. Catalyzes the reaction between ATP and alpha-D-glucose 1-phosphate (G1P) to produce pyrophosphate and ADP-Glc. This Paenarthrobacter aurescens (strain TC1) protein is Glucose-1-phosphate adenylyltransferase.